Reading from the N-terminus, the 248-residue chain is 3-deoxy-manno-octulosonate cytidylyltransferase (248 aa).

Belongs to the KdsB family.

The protein localises to the cytoplasm. It carries out the reaction 3-deoxy-alpha-D-manno-oct-2-ulosonate + CTP = CMP-3-deoxy-beta-D-manno-octulosonate + diphosphate. It participates in nucleotide-sugar biosynthesis; CMP-3-deoxy-D-manno-octulosonate biosynthesis; CMP-3-deoxy-D-manno-octulosonate from 3-deoxy-D-manno-octulosonate and CTP: step 1/1. The protein operates within bacterial outer membrane biogenesis; lipopolysaccharide biosynthesis. Functionally, activates KDO (a required 8-carbon sugar) for incorporation into bacterial lipopolysaccharide in Gram-negative bacteria. The polypeptide is 3-deoxy-manno-octulosonate cytidylyltransferase (Escherichia coli O139:H28 (strain E24377A / ETEC)).